Reading from the N-terminus, the 499-residue chain is Alpha-internexin (499 aa).

The segment at 1–87 (MSFGSEHYLC…SQAAARTNEY (87 aa)) is head. Serine 72 bears the Phosphoserine mark. Residues 88–129 (KIIRTNEKEQLQGLNDRFAVFIEKVHQLETQNRALEAELAAL) form a coil 1A region. Residues 94–407 (EKEQLQGLND…KLLEGEETRF (314 aa)) enclose the IF rod domain. Residues 130-142 (RQRHAEPSRVGEL) are linker 1. Residues 143–238 (FQRELRDLRA…QVHDEEVAEL (96 aa)) are coil 1B. Position 219 is a phosphoserine (serine 219). The tract at residues 239–262 (LATLQASSQAAAEVDVTVAKPDLT) is linker 2. The interval 263–408 (SALREIRAQY…LLEGEETRFS (146 aa)) is coil 2. Lysine 290 carries the post-translational modification N6-acetyllysine. A Phosphoserine modification is found at serine 335. Positions 409–499 (TSGLSISGLN…EETTISSQKI (91 aa)) are tail. The tract at residues 441–466 (STGLSLKKEEEEEEASKVASKKTSQI) is disordered. Phosphoserine is present on residues serine 469 and serine 496.

The protein belongs to the intermediate filament family. As to quaternary structure, forms homodimers (in vitro). Forms heterodimers with NEFL, NEFM or NEFH (in vitro). In terms of processing, O-glycosylated. As to expression, found predominantly in adult CNS.

Class-IV neuronal intermediate filament that is able to self-assemble. It is involved in the morphogenesis of neurons. It may form an independent structural network without the involvement of other neurofilaments or it may cooperate with NEFL to form the filamentous backbone to which NEFM and NEFH attach to form the cross-bridges. May also cooperate with the neuronal intermediate filament protein PRPH to form filamentous networks. The polypeptide is Alpha-internexin (INA) (Homo sapiens (Human)).